The following is a 248-amino-acid chain: Proteasome subunit alpha type-7 (248 aa).

An O-linked (GlcNAc) serine glycan is attached at S130. Y153 carries the phosphotyrosine modification. The residue at position 227 (K227) is an N6-acetyllysine.

This sequence belongs to the peptidase T1A family. As to quaternary structure, the 26S proteasome consists of a 20S proteasome core and two 19S regulatory subunits. The 20S proteasome core is a barrel-shaped complex made of 28 subunits that are arranged in four stacked rings. The two outer rings are each formed by seven alpha subunits, and the two inner rings are formed by seven beta subunits. The proteolytic activity is exerted by three beta-subunits PSMB5, PSMB6 and PSMB7. PSMA7 interacts directly with the PSMG1-PSMG2 heterodimer which promotes 20S proteasome assembly. Interacts with HIF1A. Interacts with RAB7A. Interacts with PRKN. Interacts with ABL1 and ABL2. Interacts with EMAP2. Interacts with MAVS.

It is found in the cytoplasm. The protein resides in the nucleus. Its function is as follows. Component of the 20S core proteasome complex involved in the proteolytic degradation of most intracellular proteins. This complex plays numerous essential roles within the cell by associating with different regulatory particles. Associated with two 19S regulatory particles, forms the 26S proteasome and thus participates in the ATP-dependent degradation of ubiquitinated proteins. The 26S proteasome plays a key role in the maintenance of protein homeostasis by removing misfolded or damaged proteins that could impair cellular functions, and by removing proteins whose functions are no longer required. Associated with the PA200 or PA28, the 20S proteasome mediates ubiquitin-independent protein degradation. This type of proteolysis is required in several pathways including spermatogenesis (20S-PA200 complex) or generation of a subset of MHC class I-presented antigenic peptides (20S-PA28 complex). Inhibits the transactivation function of HIF-1A under both normoxic and hypoxia-mimicking conditions. The interaction with EMAP2 increases the proteasome-mediated HIF-1A degradation under the hypoxic conditions. Plays a role in hepatitis C virus internal ribosome entry site-mediated translation. Mediates nuclear translocation of the androgen receptor (AR) and thereby enhances androgen-mediated transactivation. Promotes MAVS degradation and thereby negatively regulates MAVS-mediated innate immune response. In Bos taurus (Bovine), this protein is Proteasome subunit alpha type-7 (PSMA7).